The following is a 176-amino-acid chain: Dual-action ribosomal maturation protein DarP (176 aa).

The segment covering 1–10 has biased composition (polar residues); the sequence is MTVPNHQQDI. Residues 1–22 form a disordered region; the sequence is MTVPNHQQDISDSDLESRPSKT.

The protein belongs to the DarP family.

It localises to the cytoplasm. In terms of biological role, member of a network of 50S ribosomal subunit biogenesis factors which assembles along the 30S-50S interface, preventing incorrect 23S rRNA structures from forming. Promotes peptidyl transferase center (PTC) maturation. This chain is Dual-action ribosomal maturation protein DarP, found in Nitrosomonas eutropha (strain DSM 101675 / C91 / Nm57).